Reading from the N-terminus, the 568-residue chain is MPASISRSTYASMFGPTTGDRLRLGDTELVIEVERDLTTYGEEVKFGGGKVIRDGMGQSQRTRAEGAMDTVITNALIVDWTGIYKADVGLRDGRIAKIGKAGNPDTQPGVDIVIGPGTEIIAGEGRILTAGGMDAHIHFICPQQIEDSLHSGITTMLGGGTGPAHGTLATTCTPGPWHIGRMLQAADAFPINLAFAGKGNASLPAGLEEQVRAGASCLKLHEDWGTTPAAIDCCLSVADRMDVQVMIHTDTLNESGFVENTLAAIGGRTIHAFHTEGAGGGHAPDIIKVVGAANVIPSSTNPTMPYTANTVEEHLDMLMVCHHLDRSIPEDVAFAESRIRKETIAAEDILHDMGAFSVISSDSQAMGRVGEVITRTWQTAHKMKVQRGRLAEETGANDNQRVRRYIAKYTINPAIAHGLSRHIGSVEEGKRADLVLWQPAFFGAKPDLVLLGGMIVCAQMGDPNGSIPAQPYYSRPMFGAFGGALHASAVTFVSQAAAEDGVGERLRLQKGTLAVEGTRDIGKADMKLNVHRPSIEVNPETYEVRADGELLTCQPLAELPLAQRYFLY.

The 438-residue stretch at 131 to 568 (GGMDAHIHFI…LPLAQRYFLY (438 aa)) folds into the Urease domain. Ni(2+) is bound by residues His-136, His-138, and Lys-219. Lys-219 is subject to N6-carboxylysine. Residue His-221 coordinates substrate. The Ni(2+) site is built by His-248 and His-274. His-322 serves as the catalytic Proton donor. Asp-362 contacts Ni(2+).

This sequence belongs to the metallo-dependent hydrolases superfamily. Urease alpha subunit family. Heterotrimer of UreA (gamma), UreB (beta) and UreC (alpha) subunits. Three heterotrimers associate to form the active enzyme. The cofactor is Ni cation. Post-translationally, carboxylation allows a single lysine to coordinate two nickel ions.

Its subcellular location is the cytoplasm. It carries out the reaction urea + 2 H2O + H(+) = hydrogencarbonate + 2 NH4(+). Its pathway is nitrogen metabolism; urea degradation; CO(2) and NH(3) from urea (urease route): step 1/1. This chain is Urease subunit alpha, found in Cereibacter sphaeroides (strain KD131 / KCTC 12085) (Rhodobacter sphaeroides).